Consider the following 610-residue polypeptide: UvrABC system protein C (610 aa).

The GIY-YIG domain maps to 16–94 (SQPGVYRMYD…IKLYQPRYNV (79 aa)). The UVR domain maps to 204 to 239 (DQVLTQLIARMEKASQDLAFEEAARIRDQIQAVRRV).

It belongs to the UvrC family. Interacts with UvrB in an incision complex.

The protein localises to the cytoplasm. Functionally, the UvrABC repair system catalyzes the recognition and processing of DNA lesions. UvrC both incises the 5' and 3' sides of the lesion. The N-terminal half is responsible for the 3' incision and the C-terminal half is responsible for the 5' incision. This Salmonella paratyphi A (strain ATCC 9150 / SARB42) protein is UvrABC system protein C.